The following is a 337-amino-acid chain: Protein ABHD13 (337 aa).

Residues 30 to 50 (LLALILTFHLYGGFVLLGLIL) traverse the membrane as a helical; Signal-anchor for type II membrane protein segment. Active-site charge relay system residues include serine 193, aspartate 268, and histidine 298. Asparagine 299 carries N-linked (GlcNAc...) asparagine glycosylation.

Belongs to the serine esterase family.

The protein resides in the membrane. The protein is Protein ABHD13 of Danio rerio (Zebrafish).